A 262-amino-acid polypeptide reads, in one-letter code: MAASMAPRCSSLLWAGAAWLRQRGIGELLQPRIERSTPGRDFSLSHYQSTVIVERWWKVPLAGEGRKPRLHRRHRVYKLVEDTKHRPKDHLELILTQSVDEIGVRGDLVSVKKSVGRNKLLPQGLAVYASPENRKLFEEEKLLRQEGKLEKIQTKAGEATVKFLRSCRLEVGMKNNVKWELNPEIVARHFFKNLGVVVAPHALRLPEDPITRWGEYWCDVTVNGLDTVRVPMSVVLFRKPKTKRYKHWLAQQAAKITSPEAV.

The transit peptide at 1–49 (MAASMAPRCSSLLWAGAAWLRQRGIGELLQPRIERSTPGRDFSLSHYQS) directs the protein to the mitochondrion.

This sequence belongs to the bacterial ribosomal protein bL9 family. In terms of assembly, component of the mitochondrial ribosome large subunit (39S) which comprises a 16S rRNA and about 50 distinct proteins.

The protein resides in the mitochondrion. The chain is Large ribosomal subunit protein bL9m (Mrpl9) from Rattus norvegicus (Rat).